Consider the following 542-residue polypeptide: Excitatory amino acid transporter 1 (542 aa).

Topologically, residues 1–47 (MTKSNGEEPKMGGRMERFQQGVRKRTLLAKKKVQNITKEDVKSYLFR) are cytoplasmic. The chain crosses the membrane as a helical span at residues 48-68 (NAFVLLTVTAVIVGTILGFTL). Over 69 to 86 (RPYRMSYREVKYFSFPGE) the chain is Extracellular. Residues 87-108 (LLMRMLQMLVLPLIISSLVTGM) form a helical membrane-spanning segment. The Cytoplasmic segment spans residues 109 to 122 (AALDSKASGKMGMR). The helical transmembrane segment at 123–145 (AVVYYMTTTIIAVVIGIIIVIII) threads the bilayer. Residues 146-236 (HPGKGTKENM…ITEELVPVPG (91 aa)) are Extracellular-facing. A helical transmembrane segment spans residues 237–260 (SVNGVNALGLVVFSMCFGFVIGNM). The Cytoplasmic segment spans residues 261 to 269 (KEQGQALRE). The helical transmembrane segment at 270-297 (FFDSLNEAIMRLVAVIMWYAPVGILFLI) threads the bilayer. Residues 298–318 (AGKIVEMEDMGVIGGQLAMYT) lie on the Extracellular side of the membrane. The chain crosses the membrane as a helical span at residues 319-340 (VTVIVGLLIHAVIVLPLLYFLV). Over 341-345 (TRKNP) the chain is Cytoplasmic. Residues 346-376 (WVFIGGLLQALITALGTSSSSATLPITFKCL) constitute an intramembrane region (discontinuously helical). L-aspartate is bound at residue 363 to 365 (SSS). Residues 377 to 385 (EENNGVDKR) are Cytoplasmic-facing. A helical membrane pass occupies residues 386–412 (VTRFVLPVGATINMDGTALYEALAAIF). The Na(+) site is built by glycine 394, threonine 396, and asparagine 398. Residue threonine 402 participates in L-aspartate binding. The Extracellular segment spans residues 413–425 (IAQVNNFELNFGQ). The discontinuously helical intramembrane region spans 426–459 (IITISITATAASIGAAGIPQAGLVTMVIVLTSVG). 443 to 447 (IPQAG) serves as a coordination point for L-aspartate. Over 460-472 (LPTDDITLIIAVD) the chain is Extracellular. The helical transmembrane segment at 473–494 (WFLDRLRTTTNVLGDSLGAGIV) threads the bilayer. Residues aspartate 476 and asparagine 483 each coordinate L-aspartate. 2 residues coordinate Na(+): asparagine 483 and aspartate 487. Topologically, residues 495–542 (EHLSRHELKNRDVEMGNSVIEENEMKKPYQLIAQDNETEKPIDSETKM) are cytoplasmic. Serine 512 bears the Phosphoserine mark.

The protein belongs to the dicarboxylate/amino acid:cation symporter (DAACS) (TC 2.A.23) family. SLC1A3 subfamily. In terms of assembly, homotrimer. Glycosylated. Detected in brain. Detected at very much lower levels in heart, lung, placenta and skeletal muscle. Highly expressed in cerebellum, but also found in frontal cortex, hippocampus and basal ganglia.

The protein localises to the cell membrane. It catalyses the reaction K(+)(in) + L-glutamate(out) + 3 Na(+)(out) + H(+)(out) = K(+)(out) + L-glutamate(in) + 3 Na(+)(in) + H(+)(in). The catalysed reaction is K(+)(in) + L-aspartate(out) + 3 Na(+)(out) + H(+)(out) = K(+)(out) + L-aspartate(in) + 3 Na(+)(in) + H(+)(in). The enzyme catalyses D-aspartate(out) + K(+)(in) + 3 Na(+)(out) + H(+)(out) = D-aspartate(in) + K(+)(out) + 3 Na(+)(in) + H(+)(in). In terms of biological role, sodium-dependent, high-affinity amino acid transporter that mediates the uptake of L-glutamate and also L-aspartate and D-aspartate. Functions as a symporter that transports one amino acid molecule together with two or three Na(+) ions and one proton, in parallel with the counter-transport of one K(+) ion. Mediates Cl(-) flux that is not coupled to amino acid transport; this avoids the accumulation of negative charges due to aspartate and Na(+) symport. Plays a redundant role in the rapid removal of released glutamate from the synaptic cleft, which is essential for terminating the postsynaptic action of glutamate. This is Excitatory amino acid transporter 1 from Homo sapiens (Human).